Here is a 374-residue protein sequence, read N- to C-terminus: Carbamoyl phosphate synthase small chain (374 aa).

The CPSase stretch occupies residues 1–183 (MVLADGQMIW…QNGYSVVDNQ (183 aa)). The L-glutamine site is built by Ser41, Gly235, and Gly237. Residues 187–374 (HVVAIDYGLK…FIDLIAKERP (188 aa)) form the Glutamine amidotransferase type-1 domain. Catalysis depends on Cys264, which acts as the Nucleophile. Residues Leu265, Gln268, Asn306, Gly308, and Phe309 each coordinate L-glutamine. Catalysis depends on residues His348 and Glu350.

Belongs to the CarA family. In terms of assembly, composed of two chains; the small (or glutamine) chain promotes the hydrolysis of glutamine to ammonia, which is used by the large (or ammonia) chain to synthesize carbamoyl phosphate. Tetramer of heterodimers (alpha,beta)4.

It catalyses the reaction hydrogencarbonate + L-glutamine + 2 ATP + H2O = carbamoyl phosphate + L-glutamate + 2 ADP + phosphate + 2 H(+). The catalysed reaction is L-glutamine + H2O = L-glutamate + NH4(+). It functions in the pathway amino-acid biosynthesis; L-arginine biosynthesis; carbamoyl phosphate from bicarbonate: step 1/1. It participates in pyrimidine metabolism; UMP biosynthesis via de novo pathway; (S)-dihydroorotate from bicarbonate: step 1/3. Small subunit of the glutamine-dependent carbamoyl phosphate synthetase (CPSase). CPSase catalyzes the formation of carbamoyl phosphate from the ammonia moiety of glutamine, carbonate, and phosphate donated by ATP, constituting the first step of 2 biosynthetic pathways, one leading to arginine and/or urea and the other to pyrimidine nucleotides. The small subunit (glutamine amidotransferase) binds and cleaves glutamine to supply the large subunit with the substrate ammonia. This is Carbamoyl phosphate synthase small chain from Zymomonas mobilis subsp. mobilis (strain ATCC 31821 / ZM4 / CP4).